Here is a 301-residue protein sequence, read N- to C-terminus: Diaminopimelate epimerase (301 aa).

The substrate site is built by Asn-15, Gln-47, and Asn-67. Cys-76 acts as the Proton donor in catalysis. Residues 77–78, Asn-163, Asn-197, and 215–216 contribute to the substrate site; these read GN and ER. The Proton acceptor role is filled by Cys-224. Residue 225–226 coordinates substrate; that stretch reads GS.

This sequence belongs to the diaminopimelate epimerase family. As to quaternary structure, homodimer.

It localises to the cytoplasm. The enzyme catalyses (2S,6S)-2,6-diaminopimelate = meso-2,6-diaminopimelate. The protein operates within amino-acid biosynthesis; L-lysine biosynthesis via DAP pathway; DL-2,6-diaminopimelate from LL-2,6-diaminopimelate: step 1/1. Functionally, catalyzes the stereoinversion of LL-2,6-diaminopimelate (L,L-DAP) to meso-diaminopimelate (meso-DAP), a precursor of L-lysine and an essential component of the bacterial peptidoglycan. In Rhizobium meliloti (strain 1021) (Ensifer meliloti), this protein is Diaminopimelate epimerase.